The chain runs to 175 residues: Thioredoxin M3, chloroplastic (175 aa).

The N-terminal 59 residues, 1 to 59 (MAATATACPAPPPPRSLYRGVALAAPGRRRAGYGASSSAARRWPGCRRRWAAHRIRTVS), are a transit peptide targeting the chloroplast. Positions 61–171 (AYSPRGAKTI…YVRAIEKSIS (111 aa)) constitute a Thioredoxin domain. Residues C95 and C98 each act as nucleophile in the active site. C95 and C98 form a disulfide bridge.

This sequence belongs to the thioredoxin family. Plant M-type subfamily.

It is found in the plastid. The protein localises to the chloroplast. Functionally, probable thiol-disulfide oxidoreductase that may be involved in the redox regulation of chloroplastic enzymes. This Oryza sativa subsp. japonica (Rice) protein is Thioredoxin M3, chloroplastic.